The primary structure comprises 123 residues: Ribosome-binding factor A (123 aa).

This sequence belongs to the RbfA family. Monomer. Binds 30S ribosomal subunits, but not 50S ribosomal subunits or 70S ribosomes.

It is found in the cytoplasm. One of several proteins that assist in the late maturation steps of the functional core of the 30S ribosomal subunit. Associates with free 30S ribosomal subunits (but not with 30S subunits that are part of 70S ribosomes or polysomes). Required for efficient processing of 16S rRNA. May interact with the 5'-terminal helix region of 16S rRNA. The protein is Ribosome-binding factor A of Prochlorococcus marinus (strain NATL1A).